The following is a 517-amino-acid chain: Acetyl-coenzyme A carboxylase carboxyl transferase subunit beta, chloroplastic (517 aa).

Basic and acidic residues-rich tracts occupy residues 1 to 17, 24 to 41, 48 to 65, and 72 to 81; these read MKPTKPEGPKKPNKSNE, GDNKEDLEGPKKPNKSNE, and GDKQKDKKDG. 2 disordered regions span residues 1–179 and 204–234; these read MKPT…KEEE and KHRDRKSVPAKERELVPAQSTKRDTDPDSEA. Over residues 87–131 the composition is skewed to acidic residues; that stretch reads YDDEYEEDLEYDDEYEEDLEYDDEYEEDLEYDDEEYDDEYEEDLE. 2 stretches are compositionally biased toward basic and acidic residues: residues 132–179 and 209–229; these read GDNK…KEEE and KSVPAKERELVPAQSTKRDTD. In terms of domain architecture, CoA carboxyltransferase N-terminal spans 243–514; sequence LWVHCKLCSG…NSQVINIYNY (272 aa). Zn(2+) contacts are provided by C247, C250, C266, and C269. The C4-type zinc-finger motif lies at 247-269; the sequence is CKLCSGFNYKKILKSKNNVCEQC.

Belongs to the AccD/PCCB family. As to quaternary structure, acetyl-CoA carboxylase is a heterohexamer composed of biotin carboxyl carrier protein, biotin carboxylase and 2 subunits each of ACCase subunit alpha and ACCase plastid-coded subunit beta (accD). It depends on Zn(2+) as a cofactor.

It is found in the plastid. The protein resides in the chloroplast stroma. It catalyses the reaction N(6)-carboxybiotinyl-L-lysyl-[protein] + acetyl-CoA = N(6)-biotinyl-L-lysyl-[protein] + malonyl-CoA. It functions in the pathway lipid metabolism; malonyl-CoA biosynthesis; malonyl-CoA from acetyl-CoA: step 1/1. In terms of biological role, component of the acetyl coenzyme A carboxylase (ACC) complex. Biotin carboxylase (BC) catalyzes the carboxylation of biotin on its carrier protein (BCCP) and then the CO(2) group is transferred by the transcarboxylase to acetyl-CoA to form malonyl-CoA. The sequence is that of Acetyl-coenzyme A carboxylase carboxyl transferase subunit beta, chloroplastic from Oenothera elata subsp. hookeri (Hooker's evening primrose).